We begin with the raw amino-acid sequence, 289 residues long: Diaminopimelate epimerase (289 aa).

Substrate is bound by residues asparagine 13, glutamine 47, and asparagine 67. Cysteine 76 (proton donor) is an active-site residue. Substrate-binding positions include 77 to 78 (GN), asparagine 167, asparagine 200, and 218 to 219 (ER). Cysteine 227 functions as the Proton acceptor in the catalytic mechanism. Residue 228 to 229 (GT) coordinates substrate.

Belongs to the diaminopimelate epimerase family. Homodimer.

It is found in the cytoplasm. The enzyme catalyses (2S,6S)-2,6-diaminopimelate = meso-2,6-diaminopimelate. The protein operates within amino-acid biosynthesis; L-lysine biosynthesis via DAP pathway; DL-2,6-diaminopimelate from LL-2,6-diaminopimelate: step 1/1. Catalyzes the stereoinversion of LL-2,6-diaminopimelate (L,L-DAP) to meso-diaminopimelate (meso-DAP), a precursor of L-lysine and an essential component of the bacterial peptidoglycan. The polypeptide is Diaminopimelate epimerase (Burkholderia thailandensis (strain ATCC 700388 / DSM 13276 / CCUG 48851 / CIP 106301 / E264)).